The following is a 492-amino-acid chain: Trigger factor (492 aa).

Positions 164 to 249 (GDLVVVDFVG…VSDVRVPRKA (86 aa)) constitute a PPIase FKBP-type domain. Residues 440–492 (EAEEDSIGKHDHDHDHKEKASDKPKAKKAAAPKKKAAPKKKAAPKAEKKSSDE) form a disordered region. The span at 445–463 (SIGKHDHDHDHKEKASDKP) shows a compositional bias: basic and acidic residues. The span at 464 to 482 (KAKKAAAPKKKAAPKKKAA) shows a compositional bias: basic residues. Over residues 483–492 (PKAEKKSSDE) the composition is skewed to basic and acidic residues.

The protein belongs to the FKBP-type PPIase family. Tig subfamily.

It is found in the cytoplasm. It carries out the reaction [protein]-peptidylproline (omega=180) = [protein]-peptidylproline (omega=0). In terms of biological role, involved in protein export. Acts as a chaperone by maintaining the newly synthesized protein in an open conformation. Functions as a peptidyl-prolyl cis-trans isomerase. The chain is Trigger factor from Zymomonas mobilis subsp. mobilis (strain ATCC 31821 / ZM4 / CP4).